We begin with the raw amino-acid sequence, 595 residues long: MFS-type efflux pump MFS2 (595 aa).

N-linked (GlcNAc...) asparagine glycosylation occurs at N62. Transmembrane regions (helical) follow at residues 69–89, 106–126, 136–156, 166–186, 197–217, 225–245, 301–321, 336–356, 381–401, 409–429, 442–462, and 478–498; these read WSIT…SSAY, VITL…LIWA, LLFF…AGSP, FFAG…IADM, GIFA…GGFL, WVEG…SIFL, PIVL…YMLF, PGIG…AMVI, LPVA…FAWT, IVSI…FLSL, ASVL…FPLF, and IPAF…IYGA.

It belongs to the major facilitator superfamily. DHA1 family. Polyamines/proton antiporter (TC 2.A.1.2.16) subfamily.

It is found in the cell membrane. Functionally, MFS-type efflux pump involved in the modulation susceptibility to fluconazole and voriconazole, 2 azoles with similar molecular structure. The sequence is that of MFS-type efflux pump MFS2 from Trichophyton rubrum (strain ATCC MYA-4607 / CBS 118892) (Athlete's foot fungus).